A 647-amino-acid chain; its full sequence is Threonine--tRNA ligase (647 aa).

Residues 1 to 60 (MQVTIEDQSLEAAAGEACGQVLSRAVSGKRLKNAVACLVDGQPRDLAFPLPEDAHELALV) enclose the TGS domain. The interval 242–533 (DHRKLGAQLD…LIEHTAGALP (292 aa)) is catalytic. Zn(2+)-binding residues include Cys334, His385, and His510.

The protein belongs to the class-II aminoacyl-tRNA synthetase family. As to quaternary structure, homodimer. It depends on Zn(2+) as a cofactor.

The protein localises to the cytoplasm. It catalyses the reaction tRNA(Thr) + L-threonine + ATP = L-threonyl-tRNA(Thr) + AMP + diphosphate + H(+). Functionally, catalyzes the attachment of threonine to tRNA(Thr) in a two-step reaction: L-threonine is first activated by ATP to form Thr-AMP and then transferred to the acceptor end of tRNA(Thr). Also edits incorrectly charged L-seryl-tRNA(Thr). This chain is Threonine--tRNA ligase, found in Solidesulfovibrio magneticus (strain ATCC 700980 / DSM 13731 / RS-1) (Desulfovibrio magneticus).